The following is a 524-amino-acid chain: MILPFLVLAIGTCLTNSFVPEKEKDPSYWRQQAQETLKNALKLQKLNTNVAKNIIMFLGDGMGVSTVTAARILKGQLHHNTGEETRLEMDKFPFVALSKTYNTNAQVPDSAGTATAYLCGVKANEGTVGVSAATERTRCNTTQGNEVTSILRWAKDAGKSVGIVTTTRVNHATPSAAYAHSADRDWYSDNEMPPEALSQGCKDIAYQLMHNIKDIDVIMGGGRKYMYPKNRTDVEYELDEKARGTRLDGLDLISIWKSFKPRHKHSHYVWNRTELLALDPSRVDYLLGLFEPGDMQYELNRNNLTDPSLSEMVEVALRILTKNPKGFFLLVEGGRIDHGHHEGKAKQALHEAVEMDEAIGKAGTMTSQKDTLTVVTADHSHVFTFGGYTPRGNSIFGLAPMVSDTDKKPFTAILYGNGPGYKVVDGERENVSMVDYAHNNYQAQSAVPLRHETHGGEDVAVFAKGPMAHLLHGVHEQNYIPHVMAYASCIGANLDHCAWASSASSPSPGALLLPLALFPLRTLF.

Positions 1–17 (MILPFLVLAIGTCLTNS) are cleaved as a signal peptide. Aspartate 60 is a binding site for Mg(2+). Zn(2+) contacts are provided by aspartate 60 and serine 110. The active-site Phosphoserine intermediate is serine 110. At serine 110 the chain carries Phosphoserine. A disulfide bridge connects residues cysteine 139 and cysteine 201. Residue asparagine 140 is glycosylated (N-linked (GlcNAc...) asparagine). Threonine 173 contributes to the Mg(2+) binding site. Asparagine 230 carries N-linked (GlcNAc...) asparagine glycosylation. Glutamate 235 provides a ligand contact to Ca(2+). An N-linked (GlcNAc...) asparagine glycan is attached at asparagine 271. Residues phenylalanine 290 and glutamate 291 each contribute to the Ca(2+) site. N-linked (GlcNAc...) asparagine glycosylation occurs at asparagine 303. Aspartate 306 serves as a coordination point for Ca(2+). Mg(2+) is bound at residue glutamate 332. Positions 337, 341, 378, and 379 each coordinate Zn(2+). Residue asparagine 430 is glycosylated (N-linked (GlcNAc...) asparagine). Histidine 454 serves as a coordination point for Zn(2+). The cysteines at positions 489 and 497 are disulfide-linked. Residue serine 501 is the site of GPI-anchor amidated serine attachment. Positions 502-524 (SASSPSPGALLLPLALFPLRTLF) are cleaved as a propeptide — removed in mature form.

It belongs to the alkaline phosphatase family. Homodimer. Mg(2+) serves as cofactor. It depends on Zn(2+) as a cofactor. Ca(2+) is required as a cofactor. In terms of processing, N-glycosylated.

It is found in the cell membrane. Its subcellular location is the extracellular vesicle membrane. It localises to the mitochondrion membrane. The protein localises to the mitochondrion intermembrane space. It catalyses the reaction a phosphate monoester + H2O = an alcohol + phosphate. The catalysed reaction is diphosphate + H2O = 2 phosphate + H(+). It carries out the reaction pyridoxal 5'-phosphate + H2O = pyridoxal + phosphate. The enzyme catalyses phosphoethanolamine + H2O = ethanolamine + phosphate. It catalyses the reaction N-phosphocreatine + H2O = creatine + phosphate. The catalysed reaction is ATP + H2O = ADP + phosphate + H(+). It carries out the reaction ADP + H2O = AMP + phosphate + H(+). The enzyme catalyses AMP + H2O = adenosine + phosphate. With respect to regulation, phosphatase activity is specifically inhibited by 5-((5-chloro-2-methoxyphenyl)sulfonamido)nicotinamide (SBI-425). Its function is as follows. Alkaline phosphatase that metabolizes various phosphate compounds and plays a key role in skeletal mineralization and adaptive thermogenesis. Has broad substrate specificity and can hydrolyze a considerable variety of compounds: however, only a few substrates, such as diphosphate (inorganic pyrophosphate; PPi), pyridoxal 5'-phosphate (PLP) and N-phosphocreatine are natural substrates. Plays an essential role in skeletal and dental mineralization via its ability to hydrolyze extracellular diphosphate, a potent mineralization inhibitor, to phosphate: it thereby promotes hydroxyapatite crystal formation and increases inorganic phosphate concentration. Acts in a non-redundant manner with PHOSPHO1 in skeletal mineralization: while PHOSPHO1 mediates the initiation of hydroxyapatite crystallization in the matrix vesicles (MVs), ALPL/TNAP catalyzes the spread of hydroxyapatite crystallization in the extracellular matrix. Also promotes dephosphorylation of osteopontin (SSP1), an inhibitor of hydroxyapatite crystallization in its phosphorylated state; it is however unclear whether ALPL/TNAP mediates SSP1 dephosphorylation via a direct or indirect manner. Catalyzes dephosphorylation of PLP to pyridoxal (PL), the transportable form of vitamin B6, in order to provide a sufficient amount of PLP in the brain, an essential cofactor for enzymes catalyzing the synthesis of diverse neurotransmitters. Additionally, also able to mediate ATP degradation in a stepwise manner to adenosine, thereby regulating the availability of ligands for purinergic receptors. Also capable of dephosphorylating microbial products, such as lipopolysaccharides (LPS) as well as other phosphorylated small-molecules, such as poly-inosine:cytosine (poly I:C). Acts as a key regulator of adaptive thermogenesis as part of the futile creatine cycle: localizes to the mitochondria of thermogenic fat cells and acts by mediating hydrolysis of N-phosphocreatine to initiate a futile cycle of creatine dephosphorylation and phosphorylation. During the futile creatine cycle, creatine and N-phosphocreatine are in a futile cycle, which dissipates the high energy charge of N-phosphocreatine as heat without performing any mechanical or chemical work. In Rattus norvegicus (Rat), this protein is Alkaline phosphatase, tissue-nonspecific isozyme (Alpl).